The chain runs to 479 residues: PTS system sucrose-specific EIIBC component (479 aa).

Residues proline 4–serine 87 form the PTS EIIB type-1 domain. Cysteine 26 acts as the Phosphocysteine intermediate; for EIIB activity in catalysis. Helical transmembrane passes span isoleucine 112–leucine 132, methionine 158–alanine 178, phenylalanine 182–leucine 202, glycine 204–phenylalanine 224, glutamine 232–leucine 252, leucine 264–phenylalanine 284, alanine 303–methionine 323, phenylalanine 345–glycine 365, isoleucine 376–valine 396, proline 403–valine 423, and isoleucine 448–glycine 468. Positions isoleucine 120–alanine 477 constitute a PTS EIIC type-1 domain.

Its subcellular location is the cell inner membrane. The enzyme catalyses N(pros)-phospho-L-histidyl-[protein](out) + sucrose = sucrose 6(G)-phosphate(in) + L-histidyl-[protein]. Its function is as follows. The phosphoenolpyruvate-dependent sugar phosphotransferase system (sugar PTS), a major carbohydrate active transport system, catalyzes the phosphorylation of incoming sugar substrates concomitantly with their translocation across the cell membrane. This system is involved in sucrose transport. This is PTS system sucrose-specific EIIBC component from Vibrio alginolyticus.